Consider the following 339-residue polypeptide: Glycerol-3-phosphate dehydrogenase [NAD(P)+] (339 aa).

The NADPH site is built by Ser15, Tyr16, His36, and Lys110. Sn-glycerol 3-phosphate is bound by residues Lys110, Gly139, and Thr141. Ala143 provides a ligand contact to NADPH. Lys195, Asp248, Ser258, Arg259, and Asn260 together coordinate sn-glycerol 3-phosphate. Lys195 (proton acceptor) is an active-site residue. Arg259 lines the NADPH pocket. Positions 283 and 285 each coordinate NADPH.

It belongs to the NAD-dependent glycerol-3-phosphate dehydrogenase family.

The protein localises to the cytoplasm. The catalysed reaction is sn-glycerol 3-phosphate + NAD(+) = dihydroxyacetone phosphate + NADH + H(+). The enzyme catalyses sn-glycerol 3-phosphate + NADP(+) = dihydroxyacetone phosphate + NADPH + H(+). It functions in the pathway membrane lipid metabolism; glycerophospholipid metabolism. Its function is as follows. Catalyzes the reduction of the glycolytic intermediate dihydroxyacetone phosphate (DHAP) to sn-glycerol 3-phosphate (G3P), the key precursor for phospholipid synthesis. This Cronobacter sakazakii (strain ATCC BAA-894) (Enterobacter sakazakii) protein is Glycerol-3-phosphate dehydrogenase [NAD(P)+].